We begin with the raw amino-acid sequence, 282 residues long: Heme oxygenase 1, chloroplastic (282 aa).

The N-terminal 54 residues, 1–54, are a transit peptide targeting the chloroplast; it reads MAYLAPISSSLSIFKNPQLSRFQFSSSSPNPLFLRPRIQILSMTMNKSPSLVVV. His-86 serves as a coordination point for heme b.

It belongs to the heme oxygenase family. Widely expressed.

Its subcellular location is the plastid. It localises to the chloroplast. It carries out the reaction heme b + 3 reduced [NADPH--hemoprotein reductase] + 3 O2 = biliverdin IXalpha + CO + Fe(2+) + 3 oxidized [NADPH--hemoprotein reductase] + 3 H2O + H(+). Its activity is regulated as follows. Activated by ascorbate. In terms of biological role, key enzyme in the synthesis of the chromophore of the phytochrome family of plant photoreceptors. Catalyzes the opening of the heme ring to form the open-chain tetrapyrrole biliverdin IX with the release of iron and carbon monoxide (CO). Produces specifically the biliverdin IX-alpha isomer. Can form complex with heme, is ferredoxin-dependent and its activity is increased in the presence of ascorbate. Plays a role in salt acclimation signaling. May affect the plastid-to-nucleus signaling pathway by perturbing tetrapyrrole synthesis. The plastid-to-nucleus signal plays an important role in the coordinated expression of both nuclear- and chloroplast-localized genes that encode photosynthesis-related proteins. The sequence is that of Heme oxygenase 1, chloroplastic (HO1) from Arabidopsis thaliana (Mouse-ear cress).